We begin with the raw amino-acid sequence, 197 residues long: dCTP deaminase, dUMP-forming (197 aa).

DCTP contacts are provided by residues 105–110, Asp123, 131–133, Gln152, Tyr166, Lys174, and Gln178; these read RSSMGR and TLE. The active-site Proton donor/acceptor is the Glu133.

The protein belongs to the dCTP deaminase family. In terms of assembly, homotrimer.

It catalyses the reaction dCTP + 2 H2O = dUMP + NH4(+) + diphosphate. The protein operates within pyrimidine metabolism; dUMP biosynthesis; dUMP from dCTP: step 1/1. Functionally, bifunctional enzyme that catalyzes both the deamination of dCTP to dUTP and the hydrolysis of dUTP to dUMP without releasing the toxic dUTP intermediate. This Methanosphaera stadtmanae (strain ATCC 43021 / DSM 3091 / JCM 11832 / MCB-3) protein is dCTP deaminase, dUMP-forming.